The sequence spans 145 residues: Ribosomal RNA large subunit methyltransferase H (145 aa).

Residues Gly-94 and 113–118 (LSPLTF) contribute to the S-adenosyl-L-methionine site.

Belongs to the RNA methyltransferase RlmH family. In terms of assembly, homodimer.

It is found in the cytoplasm. The catalysed reaction is pseudouridine(1915) in 23S rRNA + S-adenosyl-L-methionine = N(3)-methylpseudouridine(1915) in 23S rRNA + S-adenosyl-L-homocysteine + H(+). Specifically methylates the pseudouridine at position 1915 (m3Psi1915) in 23S rRNA. The protein is Ribosomal RNA large subunit methyltransferase H of Sorangium cellulosum (strain So ce56) (Polyangium cellulosum (strain So ce56)).